Reading from the N-terminus, the 141-residue chain is Large ribosomal subunit protein uL22 (141 aa).

The tract at residues 110 to 141 is disordered; that stretch reads EEKKTVAKKTTTTKAPAKKTTSTKKATVKKES. Residues 117 to 134 show a composition bias toward low complexity; sequence KKTTTTKAPAKKTTSTKK.

It belongs to the universal ribosomal protein uL22 family. Part of the 50S ribosomal subunit.

Its function is as follows. This protein binds specifically to 23S rRNA; its binding is stimulated by other ribosomal proteins, e.g. L4, L17, and L20. It is important during the early stages of 50S assembly. It makes multiple contacts with different domains of the 23S rRNA in the assembled 50S subunit and ribosome. In terms of biological role, the globular domain of the protein is located near the polypeptide exit tunnel on the outside of the subunit, while an extended beta-hairpin is found that lines the wall of the exit tunnel in the center of the 70S ribosome. This is Large ribosomal subunit protein uL22 from Campylobacter jejuni (strain RM1221).